Consider the following 1042-residue polypeptide: MPMWAGGVGSPRRGMAPASTDDLFARKLRQPARPPLTPHTFEPRPVRGPLLRSGSDAGEARPPTPASPRARAHSHEEASRPAATSTRLFTDPLALLGLPAEEPEPAFPPVLEPRWFAHYDVQSLLFDWAPRSQGMGSHSEASSGTLASAEDQAASSDLLHGAPGFVCELGGEGELGLGGPASPPVPPALPNAAVSILEEPQNRTSAYSLEHADLGAGYYRKYFYGKEHQNFFGMDESLGPVAVSLRREEKEGSGGGTLHSYRVIVRTTQLRTLRGTISEDALPPGPPRGLSPRKLLEHVAPQLSPSCLRLGSASPKVPRTLLTLDEQVLSFQRKVGILYCRAGQGSEEEMYNNQEAGPAFMQFLTLLGDVVRLKGFESYRAQLDTKTDSTGTHSLYTTYQDHEIMFHVSTMLPYTPNNQQQLLRKRHIGNDIVTIVFQEPGSKPFCPTTIRSHFQHVFLVVRAHTPCTPHTTYRVAVSRTQDTPAFGPALPAGGGPFAANADFRAFLLAKALNGEQAAGHARQFHAMATRTRQQYLQDLATNEVTTTSLDSASRFGLPSLGGRRRAAPRGPGAELQAAGSLVWGVRAAPGARVAAGAQASGPEGIEVPCLLGISAEALVLVAPRDGRVVFNCACRDVLAWTFSEQQLDLYHGRGEAITLRFDGSPGQAVGEVVARLQLVSRGCETRELALPRDGQGRLGFEVDAEGFVTHVERFTFAETAGLRPGARLLRVCGQTLPSLRPEAAAQLLRSAPKVCVTVLPPDESGRPRRSFSELYTLSLQEPSRRGAPDPVQDEVQGVTLLPTTKQLLHLCLQDGGSPPGPGDLAEERTEFLHSQNSLSPRSSLSDEAPVLPNTTPDLLLATTAKPSVPSADSETPLTQDRPGSPSGSEDKGNPAPELRASFLPRTLSLRNSISRIMSEAGSGTLEDEWQAISEIASTCNTILESLSREGQPIPESGDPKGTPKSDAEPEPGNLSEKVSHLESMLRKLQEDLQKEKADRAALEEEVRSLRHNNRRLQAESESAATRLLLASKQLGSPTADLA.

2 disordered regions span residues 1 to 87 (MPMW…TSTR) and 132 to 153 (SQGMGSHSEASSGTLASAEDQA). A Phosphothreonine modification is found at Thr64. A Phosphoserine modification is found at Ser67. The span at 134 to 146 (GMGSHSEASSGTL) shows a compositional bias: polar residues. Phosphoserine is present on residues Ser182, Ser304, and Ser314. Positions 321–539 (LLTLDEQVLS…RTRQQYLQDL (219 aa)) constitute a Rap-GAP domain. The PDZ domain occupies 687–763 (ELALPRDGQG…VCVTVLPPDE (77 aa)). Phosphoserine is present on residues Ser817, Ser839, and Ser912. The disordered stretch occupies residues 830 to 903 (EFLHSQNSLS…PAPELRASFL (74 aa)). Residues 832–845 (LHSQNSLSPRSSLS) are compositionally biased toward low complexity. The segment at 946–980 (LSREGQPIPESGDPKGTPKSDAEPEPGNLSEKVSH) is disordered. A compositionally biased stretch (basic and acidic residues) spans 957–967 (GDPKGTPKSDA). Residues 972 to 1034 (GNLSEKVSHL…TRLLLASKQL (63 aa)) adopt a coiled-coil conformation.

Interacts with RRP1B; the interaction leads to inhibition of SIPA1 GTPase activity. As to expression, expressed in fetal as well as in adult tissues. Expressed abundantly in the lymphoid tissues such as thymus, spleen and peripheral blood lymphocytes and also shows a significant expression in the spinal cord.

The protein localises to the nucleus. The protein resides in the cytoplasm. It localises to the perinuclear region. Its subcellular location is the endomembrane system. In terms of biological role, GTPase activator for the nuclear Ras-related regulatory proteins Rap1 and Rap2 in vitro, converting them to the putatively inactive GDP-bound state. Affects cell cycle progression. The sequence is that of Signal-induced proliferation-associated protein 1 (SIPA1) from Homo sapiens (Human).